Here is a 530-residue protein sequence, read N- to C-terminus: NADH-quinone oxidoreductase subunit C/D (530 aa).

Positions 1 to 144 (MQEIQFIVPA…NPLCMANEET (144 aa)) are NADH dehydrogenase I subunit C. An NADH dehydrogenase I subunit D region spans residues 171 to 530 (EYVVNIGPQH…LDYVVPDIDR (360 aa)).

In the N-terminal section; belongs to the complex I 30 kDa subunit family. It in the C-terminal section; belongs to the complex I 49 kDa subunit family. As to quaternary structure, NDH-1 is composed of 13 different subunits. Subunits NuoB, CD, E, F, and G constitute the peripheral sector of the complex.

The protein localises to the cell inner membrane. The catalysed reaction is a quinone + NADH + 5 H(+)(in) = a quinol + NAD(+) + 4 H(+)(out). Functionally, NDH-1 shuttles electrons from NADH, via FMN and iron-sulfur (Fe-S) centers, to quinones in the respiratory chain. The immediate electron acceptor for the enzyme in this species is believed to be a menaquinone. Couples the redox reaction to proton translocation (for every two electrons transferred, four hydrogen ions are translocated across the cytoplasmic membrane), and thus conserves the redox energy in a proton gradient. The chain is NADH-quinone oxidoreductase subunit C/D from Bacteroides thetaiotaomicron (strain ATCC 29148 / DSM 2079 / JCM 5827 / CCUG 10774 / NCTC 10582 / VPI-5482 / E50).